A 326-amino-acid chain; its full sequence is Target of rapamycin complex subunit LST8 (326 aa).

At Met-1 the chain carries N-acetylmethionine. WD repeat units lie at residues Met-1–Thr-37, His-40–Ser-80, Gly-83–Gln-122, Gln-126–Leu-165, and Glu-168–Val-207. Position 51 is a phosphothreonine (Thr-51). Lys-86 is covalently cross-linked (Glycyl lysine isopeptide (Lys-Gly) (interchain with G-Cter in SUMO3)). Glycyl lysine isopeptide (Lys-Gly) (interchain with G-Cter in SUMO3) cross-links involve residues Lys-215, Lys-245, and Lys-261. A WD 6 repeat occupies Ala-218–Glu-257. Residues Ser-268–Gly-309 form a WD 7 repeat. Residue Lys-305 forms a Glycyl lysine isopeptide (Lys-Gly) (interchain with G-Cter in SUMO3); alternate linkage. Glycyl lysine isopeptide (Lys-Gly) (interchain with G-Cter in ubiquitin); alternate cross-links involve residues Lys-305 and Lys-313. Residue Lys-313 forms a Glycyl lysine isopeptide (Lys-Gly) (interchain with G-Cter in SUMO1); alternate linkage.

Belongs to the WD repeat LST8 family. Part of the mechanistic target of rapamycin complex 1 (mTORC1) which contains MTOR, MLST8 and RPTOR. mTORC1 associates with AKT1S1/PRAS40, which inhibits its activity. mTORC1 binds to and is inhibited by FKBP12-rapamycin. Within mTORC1, interacts directly with MTOR and RPTOR. Component of the mechanistic target of rapamycin complex 2 (mTORC2), consisting in two heterotretramers composed of MTOR, MLST8, RICTOR and MAPKAP1/SIN1. Contrary to mTORC1, mTORC2 does not bind to and is not sensitive to FKBP12-rapamycin. mTORC1 and mTORC2 associate with DEPTOR, which regulates their activity. Interacts with RHEB. Interacts with MEAK7. Interacts with SIK3. Interacts with SLC38A7; this interaction promotes the recruitment of mTORC1 to the lysosome and its subsequent activation. Post-translationally, phosphorylation at Thr-51 by CDK1 promotes ubiquitination by the SCF(FBXW7) complex, followed by degradation. Ubiquitination by the SCF(FBXW7) and SCF(FBXW11) complexes following phosphorylation at Thr-51 by CDK1, leads to its degradation by the proteasome. Ubiquitination at Lys-305 and Lys-313 by TRAF2 via 'Lys-63'-linked polyubiquitin chains inhibits formation of the mTORC2 complex, while promoting formation of the mTORC1 complex: ubiquitination disrupts the interaction between MLST8 and MAPKAP1/SIN1 to favor mTORC1 assembly. Deubiquitination at Lys-305 and Lys-313 by OTUD7B promotes MLST8 interaction with MAPKAP1/SIN1, facilitating mTORC2 assembly. In terms of processing, sumoylation with SUMO1, SUMO2 and SUMO3 promotes assembly of both mTORC1 and mTORC2 complexes.

The protein resides in the lysosome membrane. It is found in the cytoplasm. In terms of biological role, subunit of both mTORC1 and mTORC2, which regulates cell growth and survival in response to nutrient and hormonal signals. mTORC1 is activated in response to growth factors or amino acids. In response to nutrients, mTORC1 is recruited to the lysosome membrane and promotes protein, lipid and nucleotide synthesis by phosphorylating several substrates, such as ribosomal protein S6 kinase (RPS6KB1 and RPS6KB2) and EIF4EBP1 (4E-BP1). In the same time, it inhibits catabolic pathways by phosphorylating the autophagy initiation components ULK1 and ATG13, as well as transcription factor TFEB, a master regulators of lysosomal biogenesis and autophagy. The mTORC1 complex is inhibited in response to starvation and amino acid depletion. Within mTORC1, MLST8 interacts directly with MTOR and enhances its kinase activity. In nutrient-poor conditions, stabilizes the MTOR-RPTOR interaction and favors RPTOR-mediated inhibition of MTOR activity. As part of the mTORC2 complex, transduces signals from growth factors to pathways involved in proliferation, cytoskeletal organization, lipogenesis and anabolic output. mTORC2 is also activated by growth factors, but seems to be nutrient-insensitive. In response to growth factors, mTORC2 phosphorylates and activates AGC protein kinase family members, including AKT (AKT1, AKT2 and AKT3), PKC (PRKCA, PRKCB and PRKCE) and SGK1. mTORC2 functions upstream of Rho GTPases to regulate the actin cytoskeleton, probably by activating one or more Rho-type guanine nucleotide exchange factors. mTORC2 promotes the serum-induced formation of stress-fibers or F-actin. mTORC2 plays a critical role in AKT1 activation by mediating phosphorylation of different sites depending on the context, such as 'Thr-450', 'Ser-473', 'Ser-477' or 'Thr-479', facilitating the phosphorylation of the activation loop of AKT1 on 'Thr-308' by PDPK1/PDK1 which is a prerequisite for full activation. mTORC2 regulates the phosphorylation of SGK1 at 'Ser-422'. mTORC2 also modulates the phosphorylation of PRKCA on 'Ser-657'. Within mTORC2, MLST8 acts as a bridge between MAPKAP1/SIN1 and MTOR. This chain is Target of rapamycin complex subunit LST8, found in Bos taurus (Bovine).